Here is a 239-residue protein sequence, read N- to C-terminus: Segregation and condensation protein A (239 aa).

This sequence belongs to the ScpA family. As to quaternary structure, component of a cohesin-like complex composed of ScpA, ScpB and the Smc homodimer, in which ScpA and ScpB bind to the head domain of Smc. The presence of the three proteins is required for the association of the complex with DNA.

It is found in the cytoplasm. In terms of biological role, participates in chromosomal partition during cell division. May act via the formation of a condensin-like complex containing Smc and ScpB that pull DNA away from mid-cell into both cell halves. This is Segregation and condensation protein A from Streptococcus suis (strain 98HAH33).